Reading from the N-terminus, the 495-residue chain is Probable plastidic glucose transporter 3 (495 aa).

Transmembrane regions (helical) follow at residues 55–75 (LPHV…LGVV), 97–117 (LVVS…GLVA), 131–151 (LPMI…GMLL), 154–174 (FLVG…VTEV), 183–203 (YGSS…FAGI), 214–234 (ICFW…ELCV), 294–314 (VVFI…NAVF), 330–350 (SANI…VVLM), 357–377 (VLLI…AIAY), 384–404 (FGTL…FATG), 425–445 (ALAV…LLFL), and 451–471 (LGSV…VIFV).

This sequence belongs to the major facilitator superfamily. Sugar transporter (TC 2.A.1.1) family.

Its subcellular location is the plastid. The protein localises to the chloroplast membrane. May be involved in the efflux of glucose towards the cytosol. The protein is Probable plastidic glucose transporter 3 of Arabidopsis thaliana (Mouse-ear cress).